An 823-amino-acid polypeptide reads, in one-letter code: Putative ankyrin repeat domain-containing protein 20A2 (823 aa).

ANK repeat units lie at residues 66-95, 99-128, 132-161, 165-194, and 198-227; these read QHRT…QIDV, ENRT…NPNL, YGNT…HIEA, DNNT…SSHA, and LRRS…DVFA. 2 disordered regions span residues 301–343 and 355–402; these read VPEK…EVED and VQTL…LSEN. Positions 372 to 384 are enriched in basic and acidic residues; the sequence is QERHERSEKKQPQ. Coiled coils occupy residues 431-480, 565-724, and 776-805; these read KKLK…KQLE, EMIT…NNST, and LVLE…EKTE.

This is Putative ankyrin repeat domain-containing protein 20A2 from Homo sapiens (Human).